A 584-amino-acid polypeptide reads, in one-letter code: Membrane protein insertase YidC (584 aa).

The next 5 helical transmembrane spans lie at 5–25 (SVIGLVLISLIMIVWMQFMAP), 358–378 (FIGNYGLIIIIFAFLIKLVTY), 428–448 (LGGCLPVVLQMPLLFAMFYVF), 478–498 (IPLYGDHIALFPILMAVAVFL), and 516–536 (IYIFPVMMLLFFNNMPAGLGL). Residues 563-584 (ALSPVVAAPPKAPKKKKNARKR) are disordered. Residues 574 to 584 (APKKKKNARKR) are compositionally biased toward basic residues.

Belongs to the OXA1/ALB3/YidC family. Type 1 subfamily. In terms of assembly, interacts with the Sec translocase complex via SecD. Specifically interacts with transmembrane segments of nascent integral membrane proteins during membrane integration.

It localises to the cell inner membrane. Required for the insertion and/or proper folding and/or complex formation of integral membrane proteins into the membrane. Involved in integration of membrane proteins that insert both dependently and independently of the Sec translocase complex, as well as at least some lipoproteins. Aids folding of multispanning membrane proteins. In Prosthecochloris aestuarii (strain DSM 271 / SK 413), this protein is Membrane protein insertase YidC.